The chain runs to 329 residues: Glycerol-3-phosphate dehydrogenase [NAD(P)+] (329 aa).

NADPH-binding residues include Trp-11, Arg-30, and Lys-103. 3 residues coordinate sn-glycerol 3-phosphate: Lys-103, Gly-132, and Ser-134. Position 136 (Ala-136) interacts with NADPH. 5 residues coordinate sn-glycerol 3-phosphate: Lys-187, Asp-240, Ser-250, Arg-251, and Asn-252. Lys-187 serves as the catalytic Proton acceptor. Position 251 (Arg-251) interacts with NADPH. NADPH is bound by residues Val-275 and Glu-277.

It belongs to the NAD-dependent glycerol-3-phosphate dehydrogenase family.

Its subcellular location is the cytoplasm. It catalyses the reaction sn-glycerol 3-phosphate + NAD(+) = dihydroxyacetone phosphate + NADH + H(+). It carries out the reaction sn-glycerol 3-phosphate + NADP(+) = dihydroxyacetone phosphate + NADPH + H(+). Its pathway is membrane lipid metabolism; glycerophospholipid metabolism. Functionally, catalyzes the reduction of the glycolytic intermediate dihydroxyacetone phosphate (DHAP) to sn-glycerol 3-phosphate (G3P), the key precursor for phospholipid synthesis. The protein is Glycerol-3-phosphate dehydrogenase [NAD(P)+] of Nitrosomonas europaea (strain ATCC 19718 / CIP 103999 / KCTC 2705 / NBRC 14298).